The chain runs to 100 residues: NAD(P)H-quinone oxidoreductase subunit 4L, chloroplastic (100 aa).

A run of 3 helical transmembrane segments spans residues 1-21 (MLEHALISGAYLFSIGIYGLI), 29-49 (ALMCLELILNAVNVNLVTFSN), and 63-83 (IFVTAIAAAEAAIGLAIALAI).

Belongs to the complex I subunit 4L family. In terms of assembly, NDH is composed of at least 16 different subunits, 5 of which are encoded in the nucleus.

The protein localises to the plastid. It localises to the chloroplast thylakoid membrane. The catalysed reaction is a plastoquinone + NADH + (n+1) H(+)(in) = a plastoquinol + NAD(+) + n H(+)(out). It carries out the reaction a plastoquinone + NADPH + (n+1) H(+)(in) = a plastoquinol + NADP(+) + n H(+)(out). Its function is as follows. NDH shuttles electrons from NAD(P)H:plastoquinone, via FMN and iron-sulfur (Fe-S) centers, to quinones in the photosynthetic chain and possibly in a chloroplast respiratory chain. The immediate electron acceptor for the enzyme in this species is believed to be plastoquinone. Couples the redox reaction to proton translocation, and thus conserves the redox energy in a proton gradient. In Cycas taitungensis (Prince sago), this protein is NAD(P)H-quinone oxidoreductase subunit 4L, chloroplastic.